The primary structure comprises 339 residues: DNA-directed RNA polymerase subunit alpha (339 aa).

Residues Met1–Glu233 form an alpha N-terminal domain (alpha-NTD) region. Positions Gly266–Phe339 are alpha C-terminal domain (alpha-CTD).

It belongs to the RNA polymerase alpha chain family. In plastids the minimal PEP RNA polymerase catalytic core is composed of four subunits: alpha, beta, beta', and beta''. When a (nuclear-encoded) sigma factor is associated with the core the holoenzyme is formed, which can initiate transcription.

Its subcellular location is the plastid. The protein localises to the chloroplast. It carries out the reaction RNA(n) + a ribonucleoside 5'-triphosphate = RNA(n+1) + diphosphate. In terms of biological role, DNA-dependent RNA polymerase catalyzes the transcription of DNA into RNA using the four ribonucleoside triphosphates as substrates. The sequence is that of DNA-directed RNA polymerase subunit alpha from Agrostis stolonifera (Creeping bentgrass).